The chain runs to 272 residues: Lyso-glycine lipid O-acyltransferase (272 aa).

Belongs to the O-acyltransferase GlsA family.

The catalysed reaction is a lyso-glycine lipid + a fatty acyl-[ACP] = a glycine lipid + holo-[ACP]. It carries out the reaction N-[(3R)-3-hydroxyhexadecanoyl]-glycine + hexadecanoyl-[ACP] = N-[(3R)-3-(hexadecanoyloxy)hexadecanoyl]-glycine + holo-[ACP]. Its pathway is lipid metabolism. In terms of biological role, is involved in the production of glycine lipids (GL), which are phosphorus-free membrane lipids important for fitness during growth of the human gut bacterium B.thetaiotaomicron in vivo and in vitro. Catalyzes the second step of GL biosynthesis, i.e. the O-acylation of the hydroxyl group of lyso-glycine lipids, resulting in the production of the mature diacylated glycine lipids. The polypeptide is Lyso-glycine lipid O-acyltransferase (Bacteroides thetaiotaomicron (strain ATCC 29148 / DSM 2079 / JCM 5827 / CCUG 10774 / NCTC 10582 / VPI-5482 / E50)).